The following is an 856-amino-acid chain: Structure-specific endonuclease subunit SLX4 (856 aa).

The span at 1-19 (MDNAAIASQSNTPPSNGRS) shows a compositional bias: polar residues. Disordered stretches follow at residues 1 to 24 (MDNA…ARFV), 39 to 61 (IEPS…SKSP), 88 to 121 (VDSP…HKMA), 139 to 201 (KTRK…TDNE), 296 to 326 (GIQT…KKPQ), 362 to 392 (KKMG…GNGP), 621 to 640 (SKSS…SQGD), 653 to 688 (RSDS…SNEG), and 715 to 742 (DSVG…QDCD). Over residues 51-60 (STLLTSLSKS) the composition is skewed to low complexity. Over residues 139–152 (KTRKKKAATAKRTR) the composition is skewed to basic residues. The segment covering 296–309 (GIQTPTESRPATND) has biased composition (polar residues). A compositionally biased stretch (polar residues) spans 673 to 686 (SVKSQESKSFSLSN).

It belongs to the SLX4 family. In terms of assembly, forms a heterodimer with SLX1. In terms of processing, phosphorylated in response to DNA damage.

The protein resides in the nucleus. Functionally, regulatory subunit of the SLX1-SLX4 structure-specific endonuclease that resolves DNA secondary structures generated during DNA repair and recombination. Has endonuclease activity towards branched DNA substrates, introducing single-strand cuts in duplex DNA close to junctions with ss-DNA. The sequence is that of Structure-specific endonuclease subunit SLX4 from Ajellomyces dermatitidis (strain ER-3 / ATCC MYA-2586) (Blastomyces dermatitidis).